Consider the following 510-residue polypeptide: NAD(P)H-quinone oxidoreductase subunit 2 A, chloroplastic (510 aa).

13 consecutive transmembrane segments (helical) span residues 24 to 44 (LLLF…GLIL), 57 to 77 (IPWL…ALLF), 99 to 119 (IFQF…VEYI), 124 to 144 (MAIT…MFLC), 149 to 169 (LITI…LSGY), 183 to 203 (YLLM…WLYG), 227 to 247 (PGIS…LSPA), 295 to 315 (WHLL…LIAI), 323 to 343 (MLAY…IVGD), 347 to 367 (GYAS…GTFA), 395 to 415 (ALSS…AGFF), 418 to 438 (LHLF…IGLL), and 484 to 504 (MIVC…IIAI).

The protein belongs to the complex I subunit 2 family. In terms of assembly, NDH is composed of at least 16 different subunits, 5 of which are encoded in the nucleus.

Its subcellular location is the plastid. It localises to the chloroplast thylakoid membrane. It carries out the reaction a plastoquinone + NADH + (n+1) H(+)(in) = a plastoquinol + NAD(+) + n H(+)(out). The catalysed reaction is a plastoquinone + NADPH + (n+1) H(+)(in) = a plastoquinol + NADP(+) + n H(+)(out). NDH shuttles electrons from NAD(P)H:plastoquinone, via FMN and iron-sulfur (Fe-S) centers, to quinones in the photosynthetic chain and possibly in a chloroplast respiratory chain. The immediate electron acceptor for the enzyme in this species is believed to be plastoquinone. Couples the redox reaction to proton translocation, and thus conserves the redox energy in a proton gradient. The chain is NAD(P)H-quinone oxidoreductase subunit 2 A, chloroplastic from Platanus occidentalis (Sycamore).